We begin with the raw amino-acid sequence, 423 residues long: Gamma-glutamyl phosphate reductase (423 aa).

It belongs to the gamma-glutamyl phosphate reductase family.

Its subcellular location is the cytoplasm. It carries out the reaction L-glutamate 5-semialdehyde + phosphate + NADP(+) = L-glutamyl 5-phosphate + NADPH + H(+). Its pathway is amino-acid biosynthesis; L-proline biosynthesis; L-glutamate 5-semialdehyde from L-glutamate: step 2/2. Functionally, catalyzes the NADPH-dependent reduction of L-glutamate 5-phosphate into L-glutamate 5-semialdehyde and phosphate. The product spontaneously undergoes cyclization to form 1-pyrroline-5-carboxylate. The protein is Gamma-glutamyl phosphate reductase of Pseudomonas putida (strain ATCC 700007 / DSM 6899 / JCM 31910 / BCRC 17059 / LMG 24140 / F1).